The chain runs to 338 residues: 3-dehydroquinate synthase (338 aa).

The protein belongs to the archaeal-type DHQ synthase family.

The enzyme catalyses 2-amino-2,3,7-trideoxy-D-lyxo-hept-6-ulosonate + NAD(+) + H2O = 3-dehydroquinate + NH4(+) + NADH + H(+). Its function is as follows. Catalyzes the oxidative deamination and cyclization of 2-amino-3,7-dideoxy-D-threo-hept-6-ulosonic acid (ADH) to yield 3-dehydroquinate (DHQ), which is fed into the canonical shikimic pathway of aromatic amino acid biosynthesis. This is 3-dehydroquinate synthase from Cenarchaeum symbiosum (strain A).